The primary structure comprises 96 residues: Small ribosomal subunit protein bS6 (96 aa).

Belongs to the bacterial ribosomal protein bS6 family.

Functionally, binds together with bS18 to 16S ribosomal RNA. In Streptococcus mutans serotype c (strain ATCC 700610 / UA159), this protein is Small ribosomal subunit protein bS6.